A 125-amino-acid polypeptide reads, in one-letter code: Large ribosomal subunit protein bL12 (125 aa).

It belongs to the bacterial ribosomal protein bL12 family. Homodimer. Part of the ribosomal stalk of the 50S ribosomal subunit. Forms a multimeric L10(L12)X complex, where L10 forms an elongated spine to which 2 to 4 L12 dimers bind in a sequential fashion. Binds GTP-bound translation factors.

Functionally, forms part of the ribosomal stalk which helps the ribosome interact with GTP-bound translation factors. Is thus essential for accurate translation. The chain is Large ribosomal subunit protein bL12 from Liberibacter africanus (Citrus greening disease).